A 72-amino-acid chain; its full sequence is NADH dehydrogenase [ubiquinone] 1 beta subcomplex subunit 3-A (72 aa).

Residues 31-48 (ALPGIGIGVGAFCVYLVG) traverse the membrane as a helical segment.

This sequence belongs to the complex I NDUFB3 subunit family. As to quaternary structure, complex I is composed of at least 49 different subunits.

Its subcellular location is the mitochondrion inner membrane. Accessory subunit of the mitochondrial membrane respiratory chain NADH dehydrogenase (Complex I), that is believed not to be involved in catalysis. Complex I functions in the transfer of electrons from NADH to the respiratory chain. The immediate electron acceptor for the enzyme is believed to be ubiquinone. The polypeptide is NADH dehydrogenase [ubiquinone] 1 beta subcomplex subunit 3-A (Arabidopsis thaliana (Mouse-ear cress)).